The primary structure comprises 592 residues: Membrane protein insertase YidC (592 aa).

A helical transmembrane segment spans residues 7 to 27; that stretch reads NYFVAIALSVLILVAWQYFYV. The tract at residues 38–74 is disordered; sequence AEKAQQTQQVQPQQGGQQPAPGQALPGGAVPGESRDQ. Positions 41 to 69 are enriched in low complexity; that stretch reads AQQTQQVQPQQGGQQPAPGQALPGGAVPG. A run of 4 helical transmembrane segments spans residues 367–387, 441–461, 486–506, and 530–550; these read LFGNFGVAILVTTIVVKLIFF, WPILIQIPVFFALYKVIYITI, LFGLLPFDGPAFLHLGIWPII, and FTWMPLVFTFMLASFPAGLVI.

The protein belongs to the OXA1/ALB3/YidC family. Type 1 subfamily. In terms of assembly, interacts with the Sec translocase complex via SecD. Specifically interacts with transmembrane segments of nascent integral membrane proteins during membrane integration.

It is found in the cell inner membrane. Functionally, required for the insertion and/or proper folding and/or complex formation of integral membrane proteins into the membrane. Involved in integration of membrane proteins that insert both dependently and independently of the Sec translocase complex, as well as at least some lipoproteins. Aids folding of multispanning membrane proteins. This is Membrane protein insertase YidC from Sinorhizobium fredii (strain NBRC 101917 / NGR234).